The chain runs to 335 residues: Phenylalanine--tRNA ligase alpha subunit (335 aa).

Glu-262 contributes to the Mg(2+) binding site.

The protein belongs to the class-II aminoacyl-tRNA synthetase family. Phe-tRNA synthetase alpha subunit type 1 subfamily. Tetramer of two alpha and two beta subunits. Mg(2+) serves as cofactor.

The protein resides in the cytoplasm. It catalyses the reaction tRNA(Phe) + L-phenylalanine + ATP = L-phenylalanyl-tRNA(Phe) + AMP + diphosphate + H(+). In Prochlorococcus marinus (strain NATL2A), this protein is Phenylalanine--tRNA ligase alpha subunit.